The primary structure comprises 219 residues: N-(5'-phosphoribosyl)anthranilate isomerase (219 aa).

Belongs to the TrpF family.

It carries out the reaction N-(5-phospho-beta-D-ribosyl)anthranilate = 1-(2-carboxyphenylamino)-1-deoxy-D-ribulose 5-phosphate. It participates in amino-acid biosynthesis; L-tryptophan biosynthesis; L-tryptophan from chorismate: step 3/5. The polypeptide is N-(5'-phosphoribosyl)anthranilate isomerase (Chloroherpeton thalassium (strain ATCC 35110 / GB-78)).